A 272-amino-acid chain; its full sequence is Phosphate import ATP-binding protein PstB (272 aa).

The ABC transporter domain maps to 26 to 267; it reads LEIRNLDLRY…PKKRKTEDYI (242 aa). Residue 58–65 coordinates ATP; that stretch reads GPSGCGKS.

The protein belongs to the ABC transporter superfamily. Phosphate importer (TC 3.A.1.7) family. As to quaternary structure, the complex is composed of two ATP-binding proteins (PstB), two transmembrane proteins (PstC and PstA) and a solute-binding protein (PstS).

It is found in the cell inner membrane. The enzyme catalyses phosphate(out) + ATP + H2O = ADP + 2 phosphate(in) + H(+). Functionally, part of the ABC transporter complex PstSACB involved in phosphate import. Responsible for energy coupling to the transport system. This is Phosphate import ATP-binding protein PstB from Shewanella frigidimarina (strain NCIMB 400).